A 553-amino-acid polypeptide reads, in one-letter code: Glucose-6-phosphate isomerase (553 aa).

Residues 164–165 (GS), 215–220 (SKTFTT), Q359, E363, H394, and K516 each bind D-glucose 6-phosphate. E363 acts as the Proton donor in catalysis. Catalysis depends on residues H394 and K516.

Belongs to the GPI family. As to quaternary structure, homodimer.

It localises to the cytoplasm. The protein localises to the cytosol. The catalysed reaction is alpha-D-glucose 6-phosphate = beta-D-fructose 6-phosphate. The protein operates within carbohydrate degradation; glycolysis; D-glyceraldehyde 3-phosphate and glycerone phosphate from D-glucose: step 2/4. Its function is as follows. In the cytoplasm, catalyzes the conversion of glucose-6-phosphate to fructose-6-phosphate, the second step in glycolysis, and the reverse reaction during gluconeogenesis. This chain is Glucose-6-phosphate isomerase (pgiA), found in Aspergillus oryzae (strain ATCC 42149 / RIB 40) (Yellow koji mold).